The following is a 379-amino-acid chain: Cobalt-precorrin-5B C(1)-methyltransferase (379 aa).

The protein belongs to the CbiD family.

It catalyses the reaction Co-precorrin-5B + S-adenosyl-L-methionine = Co-precorrin-6A + S-adenosyl-L-homocysteine. Its pathway is cofactor biosynthesis; adenosylcobalamin biosynthesis; cob(II)yrinate a,c-diamide from sirohydrochlorin (anaerobic route): step 6/10. Catalyzes the methylation of C-1 in cobalt-precorrin-5B to form cobalt-precorrin-6A. This Salmonella heidelberg (strain SL476) protein is Cobalt-precorrin-5B C(1)-methyltransferase.